The primary structure comprises 657 residues: L-type lectin-domain containing receptor kinase I.8 (657 aa).

The N-terminal stretch at 1–23 is a signal peptide; the sequence is MAPGLDLIWMVISFLLLIHLSSQ. Residues 24–282 are Extracellular-facing; that stretch reads QETGFSFNGF…QVPHPKMKTS (259 aa). The tract at residues 25–257 is legume-lectin like; it reads ETGFSFNGFR…NHYILGWSFS (233 aa). Residues N74, N124, N181, N204, and N225 are each glycosylated (N-linked (GlcNAc...) asparagine). A helical membrane pass occupies residues 283–303; the sequence is LLLILLLIVLGIILLVLLVGA. Residues 304 to 657 lie on the Cytoplasmic side of the membrane; sequence YLYRRNKYAE…THSIQYGIGR (354 aa). One can recognise a Protein kinase domain in the interval 339-611; that stretch reads FHKDGFLGKG…VQYLDRQVSL (273 aa). Residues 345–353 and K366 each bind ATP; that span reads LGKGGFGEV. The Proton acceptor role is filled by D462.

The protein in the C-terminal section; belongs to the protein kinase superfamily. Ser/Thr protein kinase family. It in the N-terminal section; belongs to the leguminous lectin family.

It localises to the cell membrane. It catalyses the reaction L-seryl-[protein] + ATP = O-phospho-L-seryl-[protein] + ADP + H(+). The catalysed reaction is L-threonyl-[protein] + ATP = O-phospho-L-threonyl-[protein] + ADP + H(+). Its function is as follows. Involved in resistance response to the pathogenic fungus Alternaria brassicicola. The sequence is that of L-type lectin-domain containing receptor kinase I.8 from Arabidopsis thaliana (Mouse-ear cress).